The sequence spans 100 residues: Small ribosomal subunit protein uS14c (100 aa).

Belongs to the universal ribosomal protein uS14 family. Part of the 30S ribosomal subunit.

The protein localises to the plastid. It localises to the chloroplast. Functionally, binds 16S rRNA, required for the assembly of 30S particles. This is Small ribosomal subunit protein uS14c from Fagopyrum esculentum subsp. ancestrale (Wild buckwheat).